Reading from the N-terminus, the 61-residue chain is Small ribosomal subunit protein uS14B (61 aa).

Cys24, Cys27, Cys40, and Cys43 together coordinate Zn(2+).

Belongs to the universal ribosomal protein uS14 family. Zinc-binding uS14 subfamily. Part of the 30S ribosomal subunit. Contacts proteins S3 and S10. Zn(2+) serves as cofactor.

Functionally, binds 16S rRNA, required for the assembly of 30S particles and may also be responsible for determining the conformation of the 16S rRNA at the A site. In Mycobacteroides abscessus (strain ATCC 19977 / DSM 44196 / CCUG 20993 / CIP 104536 / JCM 13569 / NCTC 13031 / TMC 1543 / L948) (Mycobacterium abscessus), this protein is Small ribosomal subunit protein uS14B.